The following is a 145-amino-acid chain: Procyclic form-specific polypeptide B-alpha (145 aa).

The N-terminal stretch at 1 to 27 (MAPRSLYLLAVLLFSANLFAGVGFAAA) is a signal peptide. Positions 28-127 (AEGPEDKGLT…PEPEPGAATL (100 aa)) are disordered. Residues 31-52 (PEDKGLTKGGKGKGEKGTKVGA) show a composition bias toward basic and acidic residues. 32 consecutive repeat copies span residues 59 to 60 (DP), 61 to 62 (DP), 63 to 64 (EP), 65 to 66 (EP), 67 to 68 (EP), 69 to 70 (EP), 71 to 72 (EP), 73 to 74 (EP), 75 to 76 (EP), 77 to 78 (EP), 79 to 80 (EP), 81 to 82 (EP), 83 to 84 (EP), 85 to 86 (EP), 87 to 88 (EP), 89 to 90 (EP), 91 to 92 (EP), 93 to 94 (EP), 95 to 96 (EP), 97 to 98 (EP), 99 to 100 (EP), 101 to 102 (EP), 103 to 104 (EP), 105 to 106 (EP), 107 to 108 (EP), 109 to 110 (EP), 111 to 112 (EP), 113 to 114 (EP), 115 to 116 (EP), 117 to 118 (EP), 119 to 120 (EP), and 121 to 122 (EP). The tract at residues 59-122 (DPDPEPEPEP…EPEPEPEPEP (64 aa)) is 32 X 2 AA tandem repeats of [DE]-P. Acidic residues predominate over residues 60 to 120 (PDPEPEPEPE…EPEPEPEPEP (61 aa)). Glycine 123 is lipidated: GPI-anchor amidated glycine. The propeptide occupies 124-145 (AATLKSVALPFAIAAAALVAAF).

It localises to the cell membrane. Major surface antigen of procyclic forms. This chain is Procyclic form-specific polypeptide B-alpha (PARPB), found in Trypanosoma brucei brucei.